Reading from the N-terminus, the 434-residue chain is Trigger factor (434 aa).

Residues 161 to 246 (GDRVVIDFAG…VKGVEAPILP (86 aa)) enclose the PPIase FKBP-type domain.

This sequence belongs to the FKBP-type PPIase family. Tig subfamily.

It is found in the cytoplasm. It carries out the reaction [protein]-peptidylproline (omega=180) = [protein]-peptidylproline (omega=0). In terms of biological role, involved in protein export. Acts as a chaperone by maintaining the newly synthesized protein in an open conformation. Functions as a peptidyl-prolyl cis-trans isomerase. In Aromatoleum aromaticum (strain DSM 19018 / LMG 30748 / EbN1) (Azoarcus sp. (strain EbN1)), this protein is Trigger factor.